Reading from the N-terminus, the 68-residue chain is Large ribosomal subunit protein uL29 (68 aa).

This sequence belongs to the universal ribosomal protein uL29 family.

This chain is Large ribosomal subunit protein uL29, found in Persephonella marina (strain DSM 14350 / EX-H1).